Reading from the N-terminus, the 783-residue chain is B-cell scaffold protein with ankyrin repeats (783 aa).

An interaction with ITPR2 region spans residues 1–154 (MLPVASGTRG…GYISVIRQIL (154 aa)). In terms of domain architecture, TIR spans 25–153 (NAKDILLLYE…DGYISVIRQI (129 aa)). The 128-residue stretch at 199-326 (VLPGEIPCEK…EIPYYEFKHL (128 aa)) folds into the DBB domain. ANK repeat units lie at residues 341–370 (ELPT…ATRA) and 377–407 (DGSD…NTGR). Disordered regions lie at residues 422–521 (FSTY…AASQ), 538–586 (MERS…EDNE), 604–624 (SFII…PPKE), and 641–670 (RQSD…STRD). Basic and acidic residues predominate over residues 444-479 (RNTDRSEEPERSVEMKEEEAGAEARRSLSEGERESS). The span at 505 to 515 (HCRPPLLPPRP) shows a compositional bias: pro residues. Over residues 549 to 565 (ARPETREESSREEKKEE) the composition is skewed to basic and acidic residues. Positions 566-586 (AQEEEEEEENPYAFAETEDNE) are enriched in acidic residues. Positions 610–620 (PPAPTPRPTHI) are enriched in pro residues. The segment covering 641–660 (RQSDGDKFYSLPKKPDKTRM) has biased composition (basic and acidic residues). Phosphotyrosine is present on Tyr-649.

In terms of assembly, interacts with LYN, ITPR1 and ITPR2. Post-translationally, phosphorylated on tyrosines upon BCR activation. As to expression, specifically expressed in spleen. Highly expressed in immature B-cells and recirculating B-cells, and at low levels in pro-B and pre-B cells.

Involved in B-cell receptor (BCR)-induced Ca(2+) mobilization from intracellular stores. Promotes Lyn-mediated phosphorylation of IP3 receptors 1 and 2. In Mus musculus (Mouse), this protein is B-cell scaffold protein with ankyrin repeats (Bank1).